The chain runs to 192 residues: UPF0301 protein BMA10247_1859 (192 aa).

This sequence belongs to the UPF0301 (AlgH) family.

The sequence is that of UPF0301 protein BMA10247_1859 from Burkholderia mallei (strain NCTC 10247).